A 386-amino-acid polypeptide reads, in one-letter code: CUE domain-containing protein 1 (386 aa).

The span at 1 to 10 (MTSLFRRSSS) shows a compositional bias: low complexity. Residues 1–40 (MTSLFRRSSSGSGGGGTAGARGGGGGTAAPQELNNSRPAR) form a disordered region. Residues 11–27 (GSGGGGTAGARGGGGGT) show a composition bias toward gly residues. Residues 46 to 89 (EFNQAMDDFKTMFPNMDYDIIECVLRANSGAVDATIDQLLQMNL) enclose the CUE domain. 3 disordered regions span residues 147–172 (LAPP…RYRN), 195–225 (SIQG…DQES), and 367–386 (DFRG…REGQ). Gly residues predominate over residues 199–209 (NAGGPKPGSGE).

This chain is CUE domain-containing protein 1 (CUEDC1), found in Homo sapiens (Human).